Reading from the N-terminus, the 207-residue chain is TM2 domain-containing protein 1 (207 aa).

A signal peptide spans 1–37 (MAAAWPSGPSAPEAVTARLVGVLWFVSVTTGPWGAVA). At 40 to 128 (AGGEESLKCE…YSYKVAVALS (89 aa)) the chain is on the extracellular side. Residues Asn72, Asn75, Asn87, and Asn96 are each glycosylated (N-linked (GlcNAc...) asparagine). Positions 118 to 166 (GYSYKVAVALSLFLGWLGADRFYLGYPALGLLKFCTVGFCGIGSLIDFI) constitute a TM2 domain. A helical transmembrane segment spans residues 129-149 (LFLGWLGADRFYLGYPALGLL). Topologically, residues 150–153 (KFCT) are cytoplasmic. A helical transmembrane segment spans residues 154–174 (VGFCGIGSLIDFILISMQIVG). Topologically, residues 175–207 (PSDGSSYIIDYYGTRLTRLSITNETFRKTQLYP) are extracellular. Residue Asn197 is glycosylated (N-linked (GlcNAc...) asparagine).

Belongs to the TM2 family. Interacts with APP beta-APP42 (amyloid-beta protein 42). Post-translationally, N-glycosylated. As to expression, widely expressed.

It localises to the membrane. In terms of biological role, may participate in amyloid-beta-induced apoptosis via its interaction with beta-APP42. The polypeptide is TM2 domain-containing protein 1 (TM2D1) (Homo sapiens (Human)).